The primary structure comprises 162 residues: Protein-export protein SecB (162 aa).

Belongs to the SecB family. Homotetramer, a dimer of dimers. One homotetramer interacts with 1 SecA dimer.

It localises to the cytoplasm. One of the proteins required for the normal export of preproteins out of the cell cytoplasm. It is a molecular chaperone that binds to a subset of precursor proteins, maintaining them in a translocation-competent state. It also specifically binds to its receptor SecA. The sequence is that of Protein-export protein SecB from Pseudomonas syringae pv. syringae (strain B728a).